A 423-amino-acid chain; its full sequence is Putative competence-damage inducible protein (423 aa).

This sequence belongs to the CinA family.

This chain is Putative competence-damage inducible protein, found in Streptococcus pyogenes serotype M12 (strain MGAS2096).